The sequence spans 227 residues: GTPase ERas (227 aa).

Positions 1-19 are enriched in polar residues; the sequence is MALPTKSSILDLSSGTPCT. Residues 1–25 are disordered; that stretch reads MALPTKSSILDLSSGTPCTRSPEES. Residue 48-55 participates in GTP binding; sequence GASGVGKS. The Effector region signature appears at 70–78; the sequence is HDPTIQDSY. GTP-binding positions include 95–99 and 151–154; these read DTSGQ and NKCD. S-palmitoyl cysteine attachment occurs at residues Cys-220 and Cys-222. A Cysteine methyl ester modification is found at Cys-224. A lipid anchor (S-farnesyl cysteine) is attached at Cys-224. The propeptide at 225–227 is removed in mature form; that stretch reads SVA.

This sequence belongs to the small GTPase superfamily. Ras family. Interacts with PIK3CD. As to expression, expressed in several undifferentiated mouse embryonic stem cell lines.

The protein resides in the cell membrane. The catalysed reaction is GTP + H2O = GDP + phosphate + H(+). With respect to regulation, alternates between an inactive form bound to GDP and an active form bound to GTP. Activated by a guanine nucleotide-exchange factor (GEF) and inactivated by a GTPase-activating protein (GAP). Functionally, ras proteins bind GDP/GTP and possess intrinsic GTPase activity. Plays an important role in the tumor-like growth properties of embryonic stem cells. This is GTPase ERas (Eras) from Mus musculus (Mouse).